The primary structure comprises 939 residues: AP-2 complex subunit alpha-2 (939 aa).

Residues 11-12, Lys43, Tyr53, and 57-61 each bind a 1,2-diacyl-sn-glycero-3-phospho-(1D-myo-inositol-3,4,5-trisphosphate); these read RG and KYVCK. The interval 612–681 is disordered; the sequence is LAKLKKKKGP…AGPPPSSGGS (70 aa). A compositionally biased stretch (low complexity) spans 646–667; sequence PASTSAVSTPSPSADLLGLGAA. Over residues 668-677 the composition is skewed to pro residues; that stretch reads PPAPAGPPPS.

Belongs to the adaptor complexes large subunit family. As to quaternary structure, adaptor protein complex 2 (AP-2) is a heterotetramer composed of two large adaptins (alpha-type subunit AP2A1 or AP2A2 and beta-type subunit AP2B1), a medium adaptin (mu-type subunit AP2M1) and a small adaptin (sigma-type subunit AP2S1). Binds EPN1, EPS15, AMPH, SNAP91 and BIN1. Interacts with HIP1. Interacts with DGKD. Interacts with DENND1A, DENND1B and DENND1C. Interacts with FCHO1 and DAB2. Interacts with ATAT1; this interaction is required for efficient alpha-tubulin acetylation by ATAT1. Interacts with KIAA1107. Together with AP2B1 and AP2M1, it interacts with ADAM10; this interaction facilitates ADAM10 endocytosis from the plasma membrane during long-term potentiation in hippocampal neurons. Interacts with CLN3 (via dileucine motif). Interacts with ABCB11; this interaction regulates cell membrane expression of ABCB11 through its internalization in a clathrin-dependent manner and its subsequent degradation. Interacts with Cacfd1. Interacts with DNAJC6. As to expression, expressed in the brain (at protein level).

It is found in the cell membrane. It localises to the membrane. The protein resides in the coated pit. Functionally, component of the adaptor protein complex 2 (AP-2). Adaptor protein complexes function in protein transport via transport vesicles in different membrane traffic pathways. Adaptor protein complexes are vesicle coat components and appear to be involved in cargo selection and vesicle formation. AP-2 is involved in clathrin-dependent endocytosis in which cargo proteins are incorporated into vesicles surrounded by clathrin (clathrin-coated vesicles, CCVs) which are destined for fusion with the early endosome. The clathrin lattice serves as a mechanical scaffold but is itself unable to bind directly to membrane components. Clathrin-associated adaptor protein (AP) complexes which can bind directly to both the clathrin lattice and to the lipid and protein components of membranes are considered to be the major clathrin adaptors contributing the CCV formation. AP-2 also serves as a cargo receptor to selectively sort the membrane proteins involved in receptor-mediated endocytosis. AP-2 seems to play a role in the recycling of synaptic vesicle membranes from the presynaptic surface. AP-2 recognizes Y-X-X-[FILMV] (Y-X-X-Phi) and [ED]-X-X-X-L-[LI] endocytosis signal motifs within the cytosolic tails of transmembrane cargo molecules. AP-2 may also play a role in maintaining normal post-endocytic trafficking through the ARF6-regulated, non-clathrin pathway. During long-term potentiation in hippocampal neurons, AP-2 is responsible for the endocytosis of ADAM10. The AP-2 alpha subunit binds polyphosphoinositide-containing lipids, positioning AP-2 on the membrane. The AP-2 alpha subunit acts via its C-terminal appendage domain as a scaffolding platform for endocytic accessory proteins. The AP-2 alpha and AP-2 sigma subunits are thought to contribute to the recognition of the [ED]-X-X-X-L-[LI] motif. The protein is AP-2 complex subunit alpha-2 (AP2A2) of Homo sapiens (Human).